We begin with the raw amino-acid sequence, 583 residues long: CTP synthase (583 aa).

Residues 1–278 (MRRHPQTATK…DAFVVRRLNL (278 aa)) form an amidoligase domain region. Ser20 is a binding site for CTP. Ser20 is a binding site for UTP. ATP is bound by residues 21–26 (SLGKGL) and Asp78. Mg(2+)-binding residues include Asp78 and Glu152. Residues 159-161 (DIE), 199-204 (KTKPTQ), and Lys235 contribute to the CTP site. Residues 199-204 (KTKPTQ) and Lys235 each bind UTP. Positions 303–551 (RIALVGKYVE…VKAAIDYKEG (249 aa)) constitute a Glutamine amidotransferase type-1 domain. Gly366 contributes to the L-glutamine binding site. Cys393 acts as the Nucleophile; for glutamine hydrolysis in catalysis. Residues 394-397 (LGLQ), Glu416, and Arg477 contribute to the L-glutamine site. Residues His524 and Glu526 contribute to the active site. The segment at 559-583 (PERVSNGAERRDQVGQSIPEPANRG) is disordered.

Belongs to the CTP synthase family. Homotetramer.

It carries out the reaction UTP + L-glutamine + ATP + H2O = CTP + L-glutamate + ADP + phosphate + 2 H(+). It catalyses the reaction L-glutamine + H2O = L-glutamate + NH4(+). The catalysed reaction is UTP + NH4(+) + ATP = CTP + ADP + phosphate + 2 H(+). Its pathway is pyrimidine metabolism; CTP biosynthesis via de novo pathway; CTP from UDP: step 2/2. Its activity is regulated as follows. Allosterically activated by GTP, when glutamine is the substrate; GTP has no effect on the reaction when ammonia is the substrate. The allosteric effector GTP functions by stabilizing the protein conformation that binds the tetrahedral intermediate(s) formed during glutamine hydrolysis. Inhibited by the product CTP, via allosteric rather than competitive inhibition. Its function is as follows. Catalyzes the ATP-dependent amination of UTP to CTP with either L-glutamine or ammonia as the source of nitrogen. Regulates intracellular CTP levels through interactions with the four ribonucleotide triphosphates. The polypeptide is CTP synthase (Mycobacterium marinum (strain ATCC BAA-535 / M)).